The chain runs to 188 residues: ATP synthase subunit p18, mitochondrial (188 aa).

A mitochondrion-targeting transit peptide spans 1–18 (MMRRVYSPVFCSVAAARF). PPR repeat units follow at residues 36–70 (TNTA…PPDI), 75–109 (ATLQ…EMQH), and 116–146 (NEES…METE).

As to quaternary structure, F-type ATPases have 2 components, F(1) - the catalytic core - and F(o) - the membrane proton channel. F(1) has five subunits: alpha(3), beta(3), gamma(1), delta(1), epsilon(1), plus the additional subunit P18 (Tb427.05.1710) that is not present in F(1)F(o) ATP synthase from metazoa. Subunit P18 (Tb927.5.1710) interacts with the alpha subunit with a 1:1 stoichiometry; the interaction is direct. Subunit gamma is part of the central stalk. F(o) has three main subunits: a, b and c. The trypanosomal ATPase complex contains additional subunits that are not present in the F(1)F(o) ATP synthase from metazoa.

The protein resides in the mitochondrion. The protein localises to the mitochondrion inner membrane. Mitochondrial membrane ATP synthase (F(1)F(o) ATP synthase) produces ATP from ADP in the presence of a proton gradient across the membrane which is generated by electron transport complexes of the respiratory chain. F-type ATPases consist of two structural domains, F(1) - containing the extramembraneous catalytic core, and F(o) - containing the membrane proton channel, linked together by a central stalk and a peripheral stalk. During catalysis, ATP synthesis in the catalytic domain of F(1) is coupled via a rotary mechanism of the central stalk subunits to proton translocation. Subunits alpha and beta form the catalytic core in F(1). Rotation of the central stalk against the surrounding alpha(3)beta(3) subunits leads to hydrolysis of ATP in three separate catalytic sites on the beta subunits. Contrary to the procyclic, insect form that requires F(1)F(o) ATP synthase for ATP synthesis, the bloodstream form relies on ATP hydrolysis by F(1)F(o) ATP synthase to maintain its mitochondrial membrane potential. The protein is ATP synthase subunit p18, mitochondrial of Trypanosoma brucei brucei.